The sequence spans 122 residues: Large ribosomal subunit protein uL14 (122 aa).

Belongs to the universal ribosomal protein uL14 family. In terms of assembly, part of the 50S ribosomal subunit. Forms a cluster with proteins L3 and L19. In the 70S ribosome, L14 and L19 interact and together make contacts with the 16S rRNA in bridges B5 and B8.

Functionally, binds to 23S rRNA. Forms part of two intersubunit bridges in the 70S ribosome. The chain is Large ribosomal subunit protein uL14 from Sulfurihydrogenibium sp. (strain YO3AOP1).